Here is a 93-residue protein sequence, read N- to C-terminus: Sec-independent protein translocase protein TatA (93 aa).

A helical transmembrane segment spans residues 1 to 21 (MGSLSPWHWAILAVVVILLFG). The segment at 45–93 (EMQSENKTETSALGAQSESSAANPTPVQSQRVDPPAPSEQGHSEARPAS) is disordered. Polar residues predominate over residues 53–75 (ETSALGAQSESSAANPTPVQSQR).

It belongs to the TatA/E family. The Tat system comprises two distinct complexes: a TatABC complex, containing multiple copies of TatA, TatB and TatC subunits, and a separate TatA complex, containing only TatA subunits. Substrates initially bind to the TatABC complex, which probably triggers association of the separate TatA complex to form the active translocon.

It localises to the cell membrane. Its function is as follows. Part of the twin-arginine translocation (Tat) system that transports large folded proteins containing a characteristic twin-arginine motif in their signal peptide across membranes. TatA could form the protein-conducting channel of the Tat system. This chain is Sec-independent protein translocase protein TatA, found in Mycolicibacterium paratuberculosis (strain ATCC BAA-968 / K-10) (Mycobacterium paratuberculosis).